Consider the following 414-residue polypeptide: Serine/threonine transporter SstT (414 aa).

8 consecutive transmembrane segments (helical) span residues 22 to 42 (GLVL…TIGF), 54 to 74 (IFVK…VMAA), 89 to 109 (IIVL…IAGF), 148 to 168 (AIFK…GLAL), 189 to 209 (IVHV…AETL), 223 to 243 (LLAV…PILV), 305 to 325 (MAGA…TLGL), and 337 to 357 (IVAA…LLLI).

The protein belongs to the dicarboxylate/amino acid:cation symporter (DAACS) (TC 2.A.23) family.

Its subcellular location is the cell inner membrane. The catalysed reaction is L-serine(in) + Na(+)(in) = L-serine(out) + Na(+)(out). The enzyme catalyses L-threonine(in) + Na(+)(in) = L-threonine(out) + Na(+)(out). In terms of biological role, involved in the import of serine and threonine into the cell, with the concomitant import of sodium (symport system). This chain is Serine/threonine transporter SstT, found in Haemophilus influenzae (strain PittEE).